A 208-amino-acid chain; its full sequence is Thymidylate kinase (208 aa).

10–17 (GPEGSGKS) serves as a coordination point for ATP.

Belongs to the thymidylate kinase family.

The catalysed reaction is dTMP + ATP = dTDP + ADP. In terms of biological role, phosphorylation of dTMP to form dTDP in both de novo and salvage pathways of dTTP synthesis. The chain is Thymidylate kinase from Bacillus cytotoxicus (strain DSM 22905 / CIP 110041 / 391-98 / NVH 391-98).